The primary structure comprises 832 residues: Protein P (832 aa).

The segment at 1-177 is terminal protein domain (TP); the sequence is MPLSCPHFRK…FCGSPYSWEQ (177 aa). A spacer region spans residues 178–335; that stretch reads ELQHGAEPVC…YCLSHLVNLL (158 aa). Low complexity predominate over residues 208-224; it reads KQSRLGLQSQQRQLARS. The segment at 208-241 is disordered; the sequence is KQSRLGLQSQQRQLARSHQGRSGSIRARVHSTTR. Residues 336–679 form a polymerase/reverse transcriptase domain (RT) region; that stretch reads EDWGPCTEHG…YLTLYPVARQ (344 aa). The Reverse transcriptase domain occupies 346-589; the sequence is EHHIRIPRTP…YSLNFMGYII (244 aa). Asp418, Asp540, and Asp541 together coordinate Mg(2+).

Belongs to the hepadnaviridae P protein family.

It carries out the reaction DNA(n) + a 2'-deoxyribonucleoside 5'-triphosphate = DNA(n+1) + diphosphate. The enzyme catalyses Endonucleolytic cleavage to 5'-phosphomonoester.. Its activity is regulated as follows. Activated by host HSP70 and HSP40 in vitro to be able to bind the epsilon loop of the pgRNA. Because deletion of the RNase H region renders the protein partly chaperone-independent, the chaperones may be needed indirectly to relieve occlusion of the RNA-binding site by this domain. Inhibited by several reverse-transcriptase inhibitors: Lamivudine, Adefovir and Entecavir. Its function is as follows. Multifunctional enzyme that converts the viral RNA genome into dsDNA in viral cytoplasmic capsids. This enzyme displays a DNA polymerase activity that can copy either DNA or RNA templates, and a ribonuclease H (RNase H) activity that cleaves the RNA strand of RNA-DNA heteroduplexes in a partially processive 3'- to 5'-endonucleasic mode. Neo-synthesized pregenomic RNA (pgRNA) are encapsidated together with the P protein, and reverse-transcribed inside the nucleocapsid. Initiation of reverse-transcription occurs first by binding the epsilon loop on the pgRNA genome, and is initiated by protein priming, thereby the 5'-end of (-)DNA is covalently linked to P protein. Partial (+)DNA is synthesized from the (-)DNA template and generates the relaxed circular DNA (RC-DNA) genome. After budding and infection, the RC-DNA migrates in the nucleus, and is converted into a plasmid-like covalently closed circular DNA (cccDNA). The activity of P protein does not seem to be necessary for cccDNA generation, and is presumably released from (+)DNA by host nuclear DNA repair machinery. This is Protein P from Gibbon hepatitis B virus subtype ayw3q (isolate Hope) (HBVgbn).